The following is a 678-amino-acid chain: MYIEIASSSSLSLPLLPLTRPHIYTSIPFSTIPEARQRNLIFTVSASSSSESTQNKKVWRKQPEKNTTSSFQALRKHRRYQRSAFLDHNVDMDELLASIHQTQNEKELFSLLSTYKDRQLSIRFMVSLLSRENDWQRSLALLDWVHEEAKYTPSVFAYNVVLRNVLRAKQFDIAHGLFDEMRQRALAPDRYTYSTLITSFGKEGMFDSALSWLQKMEQDRVSGDLVLYSNLIELSRRLCDYSKAISIFSRLKRSGITPDLVAYNSMINVYGKAKLFREARLLIKEMNEAGVLPNTVSYSTLLSVYVENHKFLEALSVFAEMKEVNCALDLTTCNIMIDVYGQLDMVKEADRLFWSLRKMDIEPNVVSYNTILRVYGEAELFGEAIHLFRLMQRKDIEQNVVTYNTMIKIYGKTMEHEKATNLVQEMQSRGIEPNAITYSTIISIWGKAGKLDRAATLFQKLRSSGVEIDQVLYQTMIVAYERVGLMGHAKRLLHELKLPDNIPRETAITILAKAGRTEEATWVFRQAFESGEVKDISVFGCMINLYSRNQRYVNVIEVFEKMRTAGYFPDSNVIAMVLNAYGKQREFEKADTVYREMQEEGCVFPDEVHFQMLSLYSSKKDFEMVESLFQRLESDPNVNSKELHLVVAALYERADKLNDASRVMNRMRERGILKPFPG.

The N-terminal 64 residues, 1–64 (MYIEIASSSS…NKKVWRKQPE (64 aa)), are a transit peptide targeting the chloroplast. PPR repeat units lie at residues 154 to 188 (SVFAYNVVLRNVLRAKQFDIAHGLFDEMRQRALAP), 189 to 223 (DRYTYSTLITSFGKEGMFDSALSWLQKMEQDRVSG), 224 to 258 (DLVLYSNLIELSRRLCDYSKAISIFSRLKRSGITP), 259 to 293 (DLVAYNSMINVYGKAKLFREARLLIKEMNEAGVLP), 294 to 328 (NTVSYSTLLSVYVENHKFLEALSVFAEMKEVNCAL), 329 to 363 (DLTTCNIMIDVYGQLDMVKEADRLFWSLRKMDIEP), 364 to 398 (NVVSYNTILRVYGEAELFGEAIHLFRLMQRKDIEQ), 399 to 433 (NVVTYNTMIKIYGKTMEHEKATNLVQEMQSRGIEP), 434 to 468 (NAITYSTIISIWGKAGKLDRAATLFQKLRSSGVEI), 469 to 503 (DQVLYQTMIVAYERVGLMGHAKRLLHELKLPDNIP), 535 to 569 (DISVFGCMINLYSRNQRYVNVIEVFEKMRTAGYFP), 570 to 604 (DSNVIAMVLNAYGKQREFEKADTVYREMQEEGCVF), 605 to 638 (PDEVHFQMLSLYSSKKDFEMVESLFQRLESDPNV), and 639 to 674 (NSKELHLVVAALYERADKLNDASRVMNRMRERGILK).

It belongs to the PPR family. P subfamily.

Its subcellular location is the plastid. The protein resides in the chloroplast. In Arabidopsis thaliana (Mouse-ear cress), this protein is Pentatricopeptide repeat-containing protein At5g39980, chloroplastic.